Here is a 257-residue protein sequence, read N- to C-terminus: Major prion protein (257 aa).

A signal peptide spans 1-24 (MVKSHIGGWILVLFVAAWSDIGLC). Positions 25 to 234 (KKRPKPGGGW…EYEAYAQRGA (210 aa)) are interaction with GRB2, ERI3 and SYN1. The segment at 28 to 113 (PKPGGGWNTG…NKPSKPKTNM (86 aa)) is disordered. Tandem repeats lie at residues 54–62 (PQGGGGWGQ), 63–70 (PHGGGWGQ), 71–78 (PHGGGWGQ), 79–86 (PHGGGWGQ), and 87–95 (PHGGGGWGQ). Residues 54–95 (PQGGGGWGQPHGGGWGQPHGGGWGQPHGGGWGQPHGGGGWGQ) form a 5 X 8 AA tandem repeats of P-H-G-G-G-W-G-Q region. A compositionally biased stretch (gly residues) spans 55 to 100 (QGGGGWGQPHGGGWGQPHGGGWGQPHGGGWGQPHGGGGWGQGGGSH). Cu(2+) contacts are provided by histidine 64, glycine 65, glycine 66, histidine 72, glycine 73, glycine 74, histidine 80, glycine 81, glycine 82, histidine 88, glycine 90, and glycine 91. A disulfide bridge links cysteine 183 with cysteine 218. Residues asparagine 185 and asparagine 201 are each glycosylated (N-linked (GlcNAc...) asparagine). Alanine 234 carries GPI-anchor amidated alanine lipidation. Positions 235 to 257 (SVILFSSPPVILLISFLLFLIVG) are cleaved as a propeptide — removed in mature form.

The protein belongs to the prion family. In terms of assembly, monomer and homodimer. Has a tendency to aggregate into amyloid fibrils containing a cross-beta spine, formed by a steric zipper of superposed beta-strands. Soluble oligomers may represent an intermediate stage on the path to fibril formation. Copper binding may promote oligomerization. Interacts with GRB2, APP, ERI3/PRNPIP and SYN1. Mislocalized cytosolically exposed PrP interacts with MGRN1; this interaction alters MGRN1 subcellular location and causes lysosomal enlargement. Interacts with KIAA1191.

It is found in the cell membrane. Its subcellular location is the golgi apparatus. In terms of biological role, its primary physiological function is unclear. Has cytoprotective activity against internal or environmental stresses. May play a role in neuronal development and synaptic plasticity. May be required for neuronal myelin sheath maintenance. May play a role in iron uptake and iron homeostasis. Soluble oligomers are toxic to cultured neuroblastoma cells and induce apoptosis (in vitro). Association with GPC1 (via its heparan sulfate chains) targets PRNP to lipid rafts. Also provides Cu(2+) or Zn(2+) for the ascorbate-mediated GPC1 deaminase degradation of its heparan sulfate side chains. The chain is Major prion protein (PRNP) from Sus scrofa (Pig).